A 356-amino-acid chain; its full sequence is Thiamine thiazole synthase, chloroplastic (356 aa).

The transit peptide at 1–51 (MAAMASTAFAPSVSSTTNKLFDSSFHGAPMSPSLLRLQPIKSSRPNNLSIS) directs the protein to the chloroplast. Residues Ala101, 121 to 122 (EQ), Gly129, and Ala194 contribute to the substrate site. Position 223 is a 2,3-didehydroalanine (Cys) (Cys223). Residues Asp225, His240, Met292, and 302–304 (RMG) each bind substrate.

This sequence belongs to the THI4 family. In terms of assembly, homooctamer. Fe cation serves as cofactor. During the catalytic reaction, a sulfide is transferred from Cys-223 to a reaction intermediate, generating a dehydroalanine residue.

It is found in the plastid. It localises to the chloroplast. The catalysed reaction is [ADP-thiazole synthase]-L-cysteine + glycine + NAD(+) = [ADP-thiazole synthase]-dehydroalanine + ADP-5-ethyl-4-methylthiazole-2-carboxylate + nicotinamide + 3 H2O + 2 H(+). Functionally, involved in biosynthesis of the thiamine precursor thiazole. Catalyzes the conversion of NAD and glycine to adenosine diphosphate 5-(2-hydroxyethyl)-4-methylthiazole-2-carboxylic acid (ADT), an adenylated thiazole intermediate. The reaction includes an iron-dependent sulfide transfer from a conserved cysteine residue of the protein to a thiazole intermediate. The enzyme can only undergo a single turnover, which suggests it is a suicide enzyme. May have additional roles in adaptation to various stress conditions and in DNA damage tolerance. This chain is Thiamine thiazole synthase, chloroplastic, found in Citrus sinensis (Sweet orange).